A 55-amino-acid chain; its full sequence is Spermatid nuclear transition protein 1 (55 aa).

Residues 1–42 (MSTSRKLKSHGMRRSKSRSPHKGVKRGGSKRKYRKGNLKSRK) are compositionally biased toward basic residues. The interval 1–55 (MSTSRKLKSHGMRRSKSRSPHKGVKRGGSKRKYRKGNLKSRKRGDDANRNYRSHL) is disordered. Phosphoserine is present on residues Ser9 and Ser40.

This sequence belongs to the nuclear transition protein 1 family. In terms of tissue distribution, expressed by spermatids (at protein level).

The protein resides in the nucleus. Its subcellular location is the chromosome. Functionally, plays a key role in the replacement of histones to protamine in the elongating spermatids of mammals. In condensing spermatids, loaded onto the nucleosomes, where it promotes the recruitment and processing of protamines, which are responsible for histone eviction. The polypeptide is Spermatid nuclear transition protein 1 (TNP1) (Homo sapiens (Human)).